We begin with the raw amino-acid sequence, 129 residues long: Small ribosomal subunit protein uS9 (129 aa).

It belongs to the universal ribosomal protein uS9 family.

This chain is Small ribosomal subunit protein uS9, found in Helicobacter pylori (strain Shi470).